Consider the following 186-residue polypeptide: Large ribosomal subunit protein uL6 (186 aa).

Belongs to the universal ribosomal protein uL6 family. Part of the 50S ribosomal subunit.

Its function is as follows. This protein binds to the 23S rRNA, and is important in its secondary structure. It is located near the subunit interface in the base of the L7/L12 stalk, and near the tRNA binding site of the peptidyltransferase center. This is Large ribosomal subunit protein uL6 from Ignicoccus hospitalis (strain KIN4/I / DSM 18386 / JCM 14125).